The following is a 178-amino-acid chain: ATP-dependent protease subunit HslV (178 aa).

Threonine 2 is a catalytic residue. Na(+) is bound by residues serine 159, cysteine 162, and threonine 165.

The protein belongs to the peptidase T1B family. HslV subfamily. In terms of assembly, a double ring-shaped homohexamer of HslV is capped on each side by a ring-shaped HslU homohexamer. The assembly of the HslU/HslV complex is dependent on binding of ATP.

It is found in the cytoplasm. It carries out the reaction ATP-dependent cleavage of peptide bonds with broad specificity.. Allosterically activated by HslU binding. Its function is as follows. Protease subunit of a proteasome-like degradation complex believed to be a general protein degrading machinery. The protein is ATP-dependent protease subunit HslV of Buchnera aphidicola subsp. Cinara cedri (strain Cc).